Consider the following 491-residue polypeptide: Chromosomal replication initiator protein DnaA (491 aa).

Positions methionine 1–leucine 69 are domain I, interacts with DnaA modulators. Residues leucine 69–leucine 154 form a domain II region. Residues proline 155–serine 371 form a domain III, AAA+ region region. Residues glycine 199, glycine 201, lysine 202, and threonine 203 each contribute to the ATP site. The domain IV, binds dsDNA stretch occupies residues lysine 372–arginine 491.

It belongs to the DnaA family. Oligomerizes as a right-handed, spiral filament on DNA at oriC.

It localises to the cytoplasm. Plays an essential role in the initiation and regulation of chromosomal replication. ATP-DnaA binds to the origin of replication (oriC) to initiate formation of the DNA replication initiation complex once per cell cycle. Binds the DnaA box (a 9 base pair repeat at the origin) and separates the double-stranded (ds)DNA. Forms a right-handed helical filament on oriC DNA; dsDNA binds to the exterior of the filament while single-stranded (ss)DNA is stabiized in the filament's interior. The ATP-DnaA-oriC complex binds and stabilizes one strand of the AT-rich DNA unwinding element (DUE), permitting loading of DNA polymerase. After initiation quickly degrades to an ADP-DnaA complex that is not apt for DNA replication. Binds acidic phospholipids. This chain is Chromosomal replication initiator protein DnaA, found in Francisella tularensis subsp. holarctica (strain LVS).